The chain runs to 193 residues: Mediator of RNA polymerase II transcription subunit 11 (193 aa).

Residues 31 to 68 (AREIMQDLGKEKQISKNKMDDNANSFKKLITQVENELS) adopt a coiled-coil conformation. The segment at 115–193 (IEPPTQEVDE…EEEEGEQMEN (79 aa)) is disordered. Residues 121-143 (EVDEDNEDEEDSGDADMLEETPE) show a composition bias toward acidic residues. Residues 150 to 175 (TTSSSATTSDGGSGGADDAASSSAPR) are compositionally biased toward low complexity. The segment covering 184–193 (EEEEGEQMEN) has biased composition (acidic residues).

Belongs to the Mediator complex subunit 11 family. As to quaternary structure, component of the Mediator complex.

The protein localises to the nucleus. Its function is as follows. Component of the Mediator complex, a coactivator involved in the regulated transcription of nearly all RNA polymerase II-dependent genes. Mediator functions as a bridge to convey information from gene-specific regulatory proteins to the basal RNA polymerase II transcription machinery. Mediator is recruited to promoters by direct interactions with regulatory proteins and serves as a scaffold for the assembly of a functional pre-initiation complex with RNA polymerase II and the general transcription factors. The chain is Mediator of RNA polymerase II transcription subunit 11 (mdt-11) from Caenorhabditis briggsae.